Here is a 312-residue protein sequence, read N- to C-terminus: Secreted RxLR effector protein 14 (312 aa).

A signal peptide spans 1–20 (MHSFKLLLALIVAICTSCDA). A RxLR-dEER motif is present at residues 46–61 (RLLRAKDGKVRADEER).

This sequence belongs to the RxLR effector family.

The protein localises to the secreted. The protein resides in the host nucleus. Its function is as follows. Secreted effector that completely suppresses the host cell death induced by cell death-inducing proteins. This chain is Secreted RxLR effector protein 14, found in Plasmopara viticola (Downy mildew of grapevine).